The chain runs to 199 residues: Putative acetyltransferase SAV2555 (199 aa).

The protein belongs to the transferase hexapeptide repeat family.

The protein is Putative acetyltransferase SAV2555 of Staphylococcus aureus (strain Mu50 / ATCC 700699).